A 414-amino-acid polypeptide reads, in one-letter code: Probable 1-acylglycerol-3-phosphate O-acyltransferase (414 aa).

An AB hydrolase-1 domain is found at Pro-117–Pro-382. The GXSXG signature appears at Gly-193–Gly-197. The HXXXXD motif signature appears at His-375–Asp-380.

The protein belongs to the peptidase S33 family. ABHD4/ABHD5 subfamily.

It localises to the cytoplasm. It catalyses the reaction a 1-acyl-sn-glycero-3-phosphate + an acyl-CoA = a 1,2-diacyl-sn-glycero-3-phosphate + CoA. Lysophosphatidic acid acyltransferase which functions in phosphatidic acid biosynthesis. May regulate neutral lipid accumulation and participate in the regulation of lipid turnover in vegetative cells. May possess additional triacylglycerol lipase and phospholipase A2 activities in vitro. The polypeptide is Probable 1-acylglycerol-3-phosphate O-acyltransferase (Oryza sativa subsp. japonica (Rice)).